The following is a 69-amino-acid chain: Rubredoxin-1 (69 aa).

One can recognise a Rubredoxin-like domain in the interval 14–69; that stretch reads QASWMCAECGYIYDPAEGNLETNIRPGMPFDKLPDDWSCPVCNHPKNQFTKFISQL. Residues Cys19, Cys22, Cys52, and Cys55 each coordinate Fe cation.

It belongs to the rubredoxin family. In terms of assembly, monomer. The cofactor is Fe(3+).

Its function is as follows. Serves as an electron acceptor for pyruvate ferredoxin oxidoreductase (PFOR). The polypeptide is Rubredoxin-1 (rub1) (Chlorobaculum tepidum (strain ATCC 49652 / DSM 12025 / NBRC 103806 / TLS) (Chlorobium tepidum)).